A 51-amino-acid chain; its full sequence is MARNKPIAKKLRLAKAAKQNRRIPVWVIVKTNRKVLTHPKRRYWRRTKLKE.

The protein belongs to the eukaryotic ribosomal protein eL39 family.

In Thermococcus sibiricus (strain DSM 12597 / MM 739), this protein is Large ribosomal subunit protein eL39.